Reading from the N-terminus, the 89-residue chain is Small ribosomal subunit protein uS15 (89 aa).

The protein belongs to the universal ribosomal protein uS15 family. In terms of assembly, part of the 30S ribosomal subunit. Forms a bridge to the 50S subunit in the 70S ribosome, contacting the 23S rRNA.

Functionally, one of the primary rRNA binding proteins, it binds directly to 16S rRNA where it helps nucleate assembly of the platform of the 30S subunit by binding and bridging several RNA helices of the 16S rRNA. Its function is as follows. Forms an intersubunit bridge (bridge B4) with the 23S rRNA of the 50S subunit in the ribosome. This is Small ribosomal subunit protein uS15 from Synechocystis sp. (strain ATCC 27184 / PCC 6803 / Kazusa).